The primary structure comprises 191 residues: Adenine phosphoribosyltransferase (191 aa).

Belongs to the purine/pyrimidine phosphoribosyltransferase family. As to quaternary structure, homodimer.

The protein localises to the cytoplasm. The catalysed reaction is AMP + diphosphate = 5-phospho-alpha-D-ribose 1-diphosphate + adenine. Its pathway is purine metabolism; AMP biosynthesis via salvage pathway; AMP from adenine: step 1/1. Functionally, catalyzes a salvage reaction resulting in the formation of AMP, that is energically less costly than de novo synthesis. The chain is Adenine phosphoribosyltransferase from Nocardia farcinica (strain IFM 10152).